The following is a 296-amino-acid chain: Nucleotide-binding protein SAG0531 (296 aa).

Residue 13–20 (GMSGAGKT) coordinates ATP. Residue 63–66 (DMRS) participates in GTP binding.

Belongs to the RapZ-like family.

Functionally, displays ATPase and GTPase activities. This chain is Nucleotide-binding protein SAG0531, found in Streptococcus agalactiae serotype V (strain ATCC BAA-611 / 2603 V/R).